A 258-amino-acid chain; its full sequence is Thiazole synthase (258 aa).

The Schiff-base intermediate with DXP role is filled by K98. 1-deoxy-D-xylulose 5-phosphate is bound by residues G159, 185 to 186 (AG), and 207 to 208 (NT).

It belongs to the ThiG family. As to quaternary structure, homotetramer. Forms heterodimers with either ThiH or ThiS.

The protein localises to the cytoplasm. It catalyses the reaction [ThiS sulfur-carrier protein]-C-terminal-Gly-aminoethanethioate + 2-iminoacetate + 1-deoxy-D-xylulose 5-phosphate = [ThiS sulfur-carrier protein]-C-terminal Gly-Gly + 2-[(2R,5Z)-2-carboxy-4-methylthiazol-5(2H)-ylidene]ethyl phosphate + 2 H2O + H(+). It participates in cofactor biosynthesis; thiamine diphosphate biosynthesis. In terms of biological role, catalyzes the rearrangement of 1-deoxy-D-xylulose 5-phosphate (DXP) to produce the thiazole phosphate moiety of thiamine. Sulfur is provided by the thiocarboxylate moiety of the carrier protein ThiS. In vitro, sulfur can be provided by H(2)S. The sequence is that of Thiazole synthase from Bacillus cereus (strain ZK / E33L).